The primary structure comprises 129 residues: Small ribosomal subunit protein uS11 (129 aa).

A disordered region spans residues 108 to 129 (EDVTPIPHDGTKPKGGKRGRRV).

The protein belongs to the universal ribosomal protein uS11 family. As to quaternary structure, part of the 30S ribosomal subunit.

Its function is as follows. Located on the platform of the 30S subunit. In Methanothrix thermoacetophila (strain DSM 6194 / JCM 14653 / NBRC 101360 / PT) (Methanosaeta thermophila), this protein is Small ribosomal subunit protein uS11.